The primary structure comprises 373 residues: tRNA-specific 2-thiouridylase MnmA (373 aa).

Residues 12-19 and M38 each bind ATP; that span reads GMSGGVDS. The interaction with target base in tRNA stretch occupies residues 98–100; that stretch reads NPD. The active-site Nucleophile is the C103. The cysteines at positions 103 and 200 are disulfide-linked. G127 lines the ATP pocket. Residues 150-152 are interaction with tRNA; that stretch reads KDQ. C200 functions as the Cysteine persulfide intermediate in the catalytic mechanism. Residues 312–313 are interaction with tRNA; sequence RY.

It belongs to the MnmA/TRMU family.

It localises to the cytoplasm. It catalyses the reaction S-sulfanyl-L-cysteinyl-[protein] + uridine(34) in tRNA + AH2 + ATP = 2-thiouridine(34) in tRNA + L-cysteinyl-[protein] + A + AMP + diphosphate + H(+). Its function is as follows. Catalyzes the 2-thiolation of uridine at the wobble position (U34) of tRNA, leading to the formation of s(2)U34. This Streptococcus agalactiae serotype Ia (strain ATCC 27591 / A909 / CDC SS700) protein is tRNA-specific 2-thiouridylase MnmA.